The sequence spans 249 residues: Ribosomal RNA small subunit methyltransferase G (249 aa).

S-adenosyl-L-methionine is bound by residues glycine 88, phenylalanine 93, 111–113 (DAT), 139–140 (AE), and arginine 158. Cysteines 164 and 249 form a disulfide. Residues 245–246 (RH) form an RNA binding region.

Belongs to the methyltransferase superfamily. RNA methyltransferase RsmG family.

The protein localises to the cytoplasm. The enzyme catalyses guanosine(527) in 16S rRNA + S-adenosyl-L-methionine = N(7)-methylguanosine(527) in 16S rRNA + S-adenosyl-L-homocysteine. Functionally, specifically methylates the N7 position of guanine in position 527 of 16S rRNA. Shows a marked preference for deproteinized 16S rRNA as substrate and is completely inactive with native 30S subunits as substrate. In Thermus thermophilus (strain ATCC 27634 / DSM 579 / HB8), this protein is Ribosomal RNA small subunit methyltransferase G.